A 230-amino-acid polypeptide reads, in one-letter code: Ribosomal RNA small subunit methyltransferase G (230 aa).

Residues G74, F79, A124–E125, and R141 contribute to the S-adenosyl-L-methionine site.

The protein belongs to the methyltransferase superfamily. RNA methyltransferase RsmG family.

The protein localises to the cytoplasm. In terms of biological role, specifically methylates the N7 position of a guanine in 16S rRNA. The polypeptide is Ribosomal RNA small subunit methyltransferase G (Acholeplasma laidlawii (strain PG-8A)).